The sequence spans 405 residues: Venom serine protease 34 (405 aa).

Positions 1–35 are cleaved as a signal peptide; it reads MIFTNNIAAFQNVVLVKKVKIVLLIFYGSIMFSMT. 2 disulfides stabilise this stretch: Cys-42–Cys-70 and Cys-95–Cys-111. Residues 42–147 enclose the CUB domain; that stretch reads CDYYQNLNLG…EVRPIKRVKD (106 aa). N-linked (GlcNAc...) asparagine glycosylation is present at Asn-113. One can recognise a Peptidase S1 domain in the interval 161–397; it reads IVGGTNTGIN…YIDWIVSQTP (237 aa). Cys-188 and Cys-204 are disulfide-bonded. Residue His-203 is the Charge relay system of the active site. N-linked (GlcNAc...) asparagine glycosylation is found at Asn-209 and Asn-229. The Charge relay system role is filled by Asp-257. 2 cysteine pairs are disulfide-bonded: Cys-323–Cys-336 and Cys-345–Cys-375. Ser-349 serves as the catalytic Charge relay system.

It belongs to the peptidase S1 family. As to expression, expressed by the venom duct.

Its subcellular location is the secreted. The protein is Venom serine protease 34 of Apis mellifera (Honeybee).